The chain runs to 793 residues: Protein translocase subunit SecA 2 (793 aa).

Residues glutamine 77, 95–99, and aspartate 493 contribute to the ATP site; that span reads GEGKT.

The protein belongs to the SecA family. In terms of assembly, monomer and homodimer (Potential). Part of the accessory SecA2/SecY2 protein translocation apparatus required to export cell wall protein GspB.

The protein resides in the cell membrane. Its subcellular location is the cytoplasm. The enzyme catalyses ATP + H2O + cellular proteinSide 1 = ADP + phosphate + cellular proteinSide 2.. In terms of biological role, part of the accessory SecA2/SecY2 system specifically required to export GspB, a serine-rich repeat cell wall protein encoded upstream in the same operon. In Streptococcus gordonii, this protein is Protein translocase subunit SecA 2.